The chain runs to 368 residues: Putative phospho-2-dehydro-3-deoxyheptonate aldolase (368 aa).

Belongs to the class-I DAHP synthase family.

It catalyses the reaction D-erythrose 4-phosphate + phosphoenolpyruvate + H2O = 7-phospho-2-dehydro-3-deoxy-D-arabino-heptonate + phosphate. Its pathway is metabolic intermediate biosynthesis; chorismate biosynthesis; chorismate from D-erythrose 4-phosphate and phosphoenolpyruvate: step 1/7. Its function is as follows. Stereospecific condensation of phosphoenolpyruvate (PEP) and D-erythrose-4-phosphate (E4P) giving rise to 3-deoxy-D-arabino-heptulosonate-7-phosphate (DAHP). The protein is Putative phospho-2-dehydro-3-deoxyheptonate aldolase of Schizosaccharomyces pombe (strain 972 / ATCC 24843) (Fission yeast).